Consider the following 175-residue polypeptide: Isopentenyl-diphosphate Delta-isomerase (175 aa).

His22 and His29 together coordinate Mn(2+). The Nudix hydrolase domain occupies 27-160 (KLHRAFSVLL…PAAYTPWLAE (134 aa)). Cys64 is a catalytic residue. Residue Cys64 participates in Mg(2+) binding. Residue His66 coordinates Mn(2+). Residue Glu84 participates in Mg(2+) binding. Mn(2+) contacts are provided by Glu110 and Glu112. Glu112 is an active-site residue.

The protein belongs to the IPP isomerase type 1 family. Mg(2+) is required as a cofactor. Mn(2+) serves as cofactor.

The protein localises to the cytoplasm. It carries out the reaction isopentenyl diphosphate = dimethylallyl diphosphate. The protein operates within isoprenoid biosynthesis; dimethylallyl diphosphate biosynthesis; dimethylallyl diphosphate from isopentenyl diphosphate: step 1/1. Its function is as follows. Catalyzes the 1,3-allylic rearrangement of the homoallylic substrate isopentenyl (IPP) to its highly electrophilic allylic isomer, dimethylallyl diphosphate (DMAPP). In Nocardia farcinica (strain IFM 10152), this protein is Isopentenyl-diphosphate Delta-isomerase.